The sequence spans 272 residues: ATP synthase subunit a (272 aa).

A run of 5 helical transmembrane segments spans residues 41–61 (VLNI…LLIF), 101–121 (LIAP…LMDL), 143–165 (VPSA…ILYY), 221–241 (LIFI…LNVP), and 243–263 (AIFH…LTIV).

The protein belongs to the ATPase A chain family. F-type ATPases have 2 components, CF(1) - the catalytic core - and CF(0) - the membrane proton channel. CF(1) has five subunits: alpha(3), beta(3), gamma(1), delta(1), epsilon(1). CF(0) has three main subunits: a(1), b(2) and c(9-12). The alpha and beta chains form an alternating ring which encloses part of the gamma chain. CF(1) is attached to CF(0) by a central stalk formed by the gamma and epsilon chains, while a peripheral stalk is formed by the delta and b chains.

Its subcellular location is the cell inner membrane. Functionally, key component of the proton channel; it plays a direct role in the translocation of protons across the membrane. The polypeptide is ATP synthase subunit a (Sodalis glossinidius (strain morsitans)).